The sequence spans 306 residues: Bifunctional protein FolD 1 (306 aa).

Residues 170-172 (GRG), T199, and V240 contribute to the NADP(+) site. The segment at 285–306 (ARRTRSSRTPVRLPDSGAPAGR) is disordered.

Belongs to the tetrahydrofolate dehydrogenase/cyclohydrolase family. Homodimer.

It catalyses the reaction (6R)-5,10-methylene-5,6,7,8-tetrahydrofolate + NADP(+) = (6R)-5,10-methenyltetrahydrofolate + NADPH. The enzyme catalyses (6R)-5,10-methenyltetrahydrofolate + H2O = (6R)-10-formyltetrahydrofolate + H(+). It functions in the pathway one-carbon metabolism; tetrahydrofolate interconversion. In terms of biological role, catalyzes the oxidation of 5,10-methylenetetrahydrofolate to 5,10-methenyltetrahydrofolate and then the hydrolysis of 5,10-methenyltetrahydrofolate to 10-formyltetrahydrofolate. In Salinispora tropica (strain ATCC BAA-916 / DSM 44818 / JCM 13857 / NBRC 105044 / CNB-440), this protein is Bifunctional protein FolD 1.